Here is a 403-residue protein sequence, read N- to C-terminus: Na(+)-translocating NADH-quinone reductase subunit B (403 aa).

Helical transmembrane passes span 56-76, 121-141, 163-183, 220-240, 265-285, 287-307, 312-332, 348-368, and 371-391; these read MMITVWLCTFPAMFFGMWNTG, AYFLPVYAVTFIVGGFWEVLF, ILPPSIPLWQVALGISFGVVI, WTAVDGFAGATSLSLAASGGI, TSTLAIAIGGLVLLITKIASW, IVSGVMLGMIGLSLLLNLIGS, MFAMPWYWHLVVGGFAFGMFF, WIFGALIGVMVVLIRVVNPAF, and GMMLAILFANLFAPLIDHFVV. FMN phosphoryl threonine is present on T230.

It belongs to the NqrB/RnfD family. As to quaternary structure, composed of six subunits; NqrA, NqrB, NqrC, NqrD, NqrE and NqrF. The cofactor is FMN.

It is found in the cell inner membrane. It catalyses the reaction a ubiquinone + n Na(+)(in) + NADH + H(+) = a ubiquinol + n Na(+)(out) + NAD(+). Its function is as follows. NQR complex catalyzes the reduction of ubiquinone-1 to ubiquinol by two successive reactions, coupled with the transport of Na(+) ions from the cytoplasm to the periplasm. NqrA to NqrE are probably involved in the second step, the conversion of ubisemiquinone to ubiquinol. This is Na(+)-translocating NADH-quinone reductase subunit B from Ectopseudomonas mendocina (strain ymp) (Pseudomonas mendocina).